Here is a 276-residue protein sequence, read N- to C-terminus: Large ribosomal subunit protein uL2 (276 aa).

2 disordered regions span residues 1–20 and 219–276; these read MGIKKYNPTTNGRRNMTTND and TVRG…RRKK. A compositionally biased stretch (polar residues) spans 7–20; sequence NPTTNGRRNMTTND.

Belongs to the universal ribosomal protein uL2 family. Part of the 50S ribosomal subunit. Forms a bridge to the 30S subunit in the 70S ribosome.

In terms of biological role, one of the primary rRNA binding proteins. Required for association of the 30S and 50S subunits to form the 70S ribosome, for tRNA binding and peptide bond formation. It has been suggested to have peptidyltransferase activity; this is somewhat controversial. Makes several contacts with the 16S rRNA in the 70S ribosome. The protein is Large ribosomal subunit protein uL2 of Bacillus mycoides (strain KBAB4) (Bacillus weihenstephanensis).